We begin with the raw amino-acid sequence, 535 residues long: uncharacterized protein (535 aa).

Disordered stretches follow at residues 1 to 58, 211 to 254, 313 to 353, 376 to 416, 421 to 440, and 508 to 535; these read MSMK…PRGP, EPPK…PPCI, RRVA…EQVK, RPDK…DQRL, QGLDSGAMDDDTYNPYDAAW, and SLFEHTKEKKRGGDGGDSRGESKRSRRD. Residues 22 to 34 show a composition bias toward basic and acidic residues; it reads IRRDPWFGGRDNE. The segment at 179–342 is SNW; that stretch reads AQYIRYTPSQ…KARQERSAMR (164 aa). Residues 376-393 are compositionally biased toward basic and acidic residues; the sequence is RPDKADKLRKERERDISE. Over residues 511-535 the composition is skewed to basic and acidic residues; that stretch reads EHTKEKKRGGDGGDSRGESKRSRRD.

The protein belongs to the SNW family.

This is an uncharacterized protein from Caenorhabditis elegans.